A 205-amino-acid chain; its full sequence is MADIIHLKAEQRTEFGKGAARRIRRDDKVPAVMYGHDHDPIHVTLDGHATLLALRTENPLLSIEIEGQKPMLALPKDVQRDVLKGFVRHVDLLTVRRGEKVDVNVALRITGESAPGTIAMTEFNEIEVQADLLNIPEVIEIDVTGLEAGTTIYLGDLKLPEGTSLLGDAEDVAATVAFPETEPVEDEESAGEDAQGESEEKAAKE.

Residues 178–205 (FPETEPVEDEESAGEDAQGESEEKAAKE) form a disordered region. Acidic residues predominate over residues 182–197 (EPVEDEESAGEDAQGE).

It belongs to the bacterial ribosomal protein bL25 family. CTC subfamily. In terms of assembly, part of the 50S ribosomal subunit; part of the 5S rRNA/L5/L18/L25 subcomplex. Contacts the 5S rRNA. Binds to the 5S rRNA independently of L5 and L18.

Functionally, this is one of the proteins that binds to the 5S RNA in the ribosome where it forms part of the central protuberance. The sequence is that of Large ribosomal subunit protein bL25 from Cutibacterium acnes (strain DSM 16379 / KPA171202) (Propionibacterium acnes).